The following is a 316-amino-acid chain: Acetyl-coenzyme A carboxylase carboxyl transferase subunit alpha (316 aa).

Residues Leu36 to Glu290 form the CoA carboxyltransferase C-terminal domain.

This sequence belongs to the AccA family. In terms of assembly, acetyl-CoA carboxylase is a heterohexamer composed of biotin carboxyl carrier protein (AccB), biotin carboxylase (AccC) and two subunits each of ACCase subunit alpha (AccA) and ACCase subunit beta (AccD).

It is found in the cytoplasm. It catalyses the reaction N(6)-carboxybiotinyl-L-lysyl-[protein] + acetyl-CoA = N(6)-biotinyl-L-lysyl-[protein] + malonyl-CoA. Its pathway is lipid metabolism; malonyl-CoA biosynthesis; malonyl-CoA from acetyl-CoA: step 1/1. Its function is as follows. Component of the acetyl coenzyme A carboxylase (ACC) complex. First, biotin carboxylase catalyzes the carboxylation of biotin on its carrier protein (BCCP) and then the CO(2) group is transferred by the carboxyltransferase to acetyl-CoA to form malonyl-CoA. The protein is Acetyl-coenzyme A carboxylase carboxyl transferase subunit alpha of Thermus thermophilus (strain ATCC 27634 / DSM 579 / HB8).